The following is a 466-amino-acid chain: Glutamate--tRNA ligase 2 (466 aa).

A 'HIGH' region motif is present at residues 9 to 19 (PSPTGSLHLGG). The short motif at 236 to 240 (KLSKR) is the 'KMSKS' region element. K239 provides a ligand contact to ATP.

Belongs to the class-I aminoacyl-tRNA synthetase family. Glutamate--tRNA ligase type 1 subfamily. Monomer.

It localises to the cytoplasm. The enzyme catalyses tRNA(Glu) + L-glutamate + ATP = L-glutamyl-tRNA(Glu) + AMP + diphosphate. Its function is as follows. Catalyzes the attachment of glutamate to tRNA(Glu) in a two-step reaction: glutamate is first activated by ATP to form Glu-AMP and then transferred to the acceptor end of tRNA(Glu). This Anaplasma marginale (strain St. Maries) protein is Glutamate--tRNA ligase 2.